A 273-amino-acid chain; its full sequence is Formamidopyrimidine-DNA glycosylase (273 aa).

The active-site Schiff-base intermediate with DNA is Pro-2. Residue Glu-3 is the Proton donor of the active site. Lys-58 functions as the Proton donor; for beta-elimination activity in the catalytic mechanism. His-92, Arg-111, and Lys-153 together coordinate DNA. Residues 238–272 form an FPG-type zinc finger; the sequence is KVYGREGQSCLSCSSTIIKIKHSGRSTFYCKTCQY. Catalysis depends on Arg-262, which acts as the Proton donor; for delta-elimination activity.

This sequence belongs to the FPG family. In terms of assembly, monomer. It depends on Zn(2+) as a cofactor.

It catalyses the reaction Hydrolysis of DNA containing ring-opened 7-methylguanine residues, releasing 2,6-diamino-4-hydroxy-5-(N-methyl)formamidopyrimidine.. The catalysed reaction is 2'-deoxyribonucleotide-(2'-deoxyribose 5'-phosphate)-2'-deoxyribonucleotide-DNA = a 3'-end 2'-deoxyribonucleotide-(2,3-dehydro-2,3-deoxyribose 5'-phosphate)-DNA + a 5'-end 5'-phospho-2'-deoxyribonucleoside-DNA + H(+). Functionally, involved in base excision repair of DNA damaged by oxidation or by mutagenic agents. Acts as a DNA glycosylase that recognizes and removes damaged bases. Has a preference for oxidized purines, such as 7,8-dihydro-8-oxoguanine (8-oxoG). Has AP (apurinic/apyrimidinic) lyase activity and introduces nicks in the DNA strand. Cleaves the DNA backbone by beta-delta elimination to generate a single-strand break at the site of the removed base with both 3'- and 5'-phosphates. This Rickettsia conorii (strain ATCC VR-613 / Malish 7) protein is Formamidopyrimidine-DNA glycosylase.